A 911-amino-acid chain; its full sequence is Inositol 1,4,5-triphosphate receptor associated 1 (911 aa).

Positions 1-11 are enriched in basic and acidic residues; sequence MVKAPQSEERL. 4 disordered regions span residues 1–21, 39–122, 174–405, and 478–498; these read MVKAPQSEERLAGGGKGNNSV, EVPG…HRHL, LTRR…GPRL, and EQEKGHPSELSSAIEEEESKG. A compositionally biased stretch (polar residues) spans 68–86; sequence AAQSPAGQDPATTGISCSP. A compositionally biased stretch (basic residues) spans 111–122; sequence HSPHRRLSHRHL. Position 118 is a phosphoserine (S118). The tract at residues 152–184 is interaction with PRKG1; sequence SEEDKKKNLALLEEAKLVSERFLTRRGRKSRSS. Positions 183–212 are enriched in polar residues; sequence SSPGESSPAVSPNLSPGASPASSQSNSLTV. Basic and acidic residues predominate over residues 277–292; that stretch reads TVEKSKEITIEQKENF. The residue at position 393 (S393) is a Phosphoserine. Residues 534-580 form an interaction with ITPR1 region; the sequence is NVFVQLSLAFRNDSYTLESRINQAERERNLTEENTEKELENFKASIT. A coiled-coil region spans residues 547–645; that stretch reads SYTLESRINQ…MQYVENLKRT (99 aa). Phosphoserine is present on residues S683 and S696. 2 disordered regions span residues 706-766 and 787-829; these read LNLP…TPSC and YQEG…KEQR. The segment covering 708–728 has biased composition (low complexity); the sequence is LPGQSPSSSPIPSLPALSESS. Residues 790–801 show a composition bias toward basic and acidic residues; it reads GLKKTKELQGLR. Acidic residues predominate over residues 802–825; the sequence is EEEEEQKSESPEEPEEVAETEEEE. A helical transmembrane segment spans residues 853 to 873; that stretch reads VIWMMAAAMLVLTVVLGLYGS.

As to quaternary structure, interacts with PRKG1/cGKI-beta and ITPR1/IP3R type I. Part of cGMP kinase signaling complex at least composed of ACTA2/alpha-actin, CNN1/calponin H1, PLN/phospholamban, PRKG1 and ITPR1. Interacts with HCN4; regulates HCN4 channel activity. Phosphorylated by PRKG1/cGKI-beta. Phosphorylation at Ser-696 is necessary for PRKG1-induced calcium release in the cytosol. Highly expressed in trachea, aorta and uterus.

It is found in the sarcoplasmic reticulum. The protein localises to the cytoplasm. The protein resides in the perinuclear region. Its subcellular location is the membrane. Plays a role as NO/PRKG1-dependent regulator of IP3-induced calcium release; its phosphorylation by PRKG1 inhibits bradykinin and IP3-induced calcium release from intracellular stores. Recruits PRKG1 to the endoplasmic reticulum and may mediate the assembly of PRKG1 and ITPR1 in a macrocomplex. Involved in PRKG1 signaling cascade leading to inhibition of platelet activation and aggregation. Also mediates NO-dependent inhibition of calcium signaling in gastrointestinal smooth muscle contributing to NO-dependent relaxation. Plays a role in the regulation of cellular excitability by regulating the hyperpolarization-activated cyclic nucleotide-gated HCN4 channel activity. The polypeptide is Inositol 1,4,5-triphosphate receptor associated 1 (IRAG1) (Bos taurus (Bovine)).